The primary structure comprises 508 residues: Cytochrome P450 monooxygenase aflV (508 aa).

The helical transmembrane segment at 18–38 (LTWWFLAVGGAWIVSKIIKIL) threads the bilayer. N-linked (GlcNAc...) asparagine glycans are attached at residues asparagine 192, asparagine 209, asparagine 302, and asparagine 408. Position 453 (cysteine 453) interacts with heme.

The protein belongs to the cytochrome P450 family. The cofactor is heme.

Its subcellular location is the membrane. Its pathway is mycotoxin biosynthesis; aflatoxin biosynthesis. Functionally, cytochrome P450 monooxygenase; part of the gene cluster that mediates the biosynthesis of aflatoxins, a group of polyketide-derived furanocoumarins, and part of the most toxic and carcinogenic compounds among the known mycotoxins. The four major aflatoxins produced by A.parasiticus are aflatoxin B1 (AFB1), aflatoxin B2 (AFB2), aflatoxin G1 (AFG1) and aflatoxin G2 (AFG2). The role of the cytochrome P450 monooxygenase aflV in aflatoxin biosynthesis has still to be characterized. The biosynthesis of aflatoxins begins with the norsolorinic acid synthase aflC that combines a hexanoyl starter unit produced by the fatty acid synthase aflA/aflB and 7 malonyl-CoA extender units to synthesize the precursor NOR. The second step is the conversion of NOR to averantin and requires the norsolorinic acid ketoreductase aflD, which catalyzes the dehydration of norsolorinic acid to form (1'S)-averantin. The norsolorinic acid reductases aflE and aflF may also play a role in the conversion of NOR to AVN. The cytochrome P450 monooxygenase aflG then catalyzes the hydroxylation of AVN to 5'hydroxyaverantin (HAVN). The next step is performed by the 5'-hydroxyaverantin dehydrogenase aflH that transforms HAVN to 5'-oxoaverantin (OAVN) which is further converted to averufin (AVF) by aflK that plays a dual role in the pathway, as a 5'-oxoaverantin cyclase that mediates conversion of 5'-oxoaverantin, as well as a versicolorin B synthase in a later step in the pathway. The averufin oxidase aflI catalyzes the conversion of AVF to versiconal hemiacetal acetate (VHA). VHA is then the substrate for the versiconal hemiacetal acetate esterase aflJ to yield versiconal (VAL). Versicolorin B synthase aflK then converts VAL to versicolorin B (VERB) by closing the bisfuran ring of aflatoxin which is required for DNA-binding, thus giving to aflatoxin its activity as a mutagen. Then, the activity of the versicolorin B desaturase aflL leads to versicolorin A (VERA). A branch point starts from VERB since it can also be converted to dihydrodemethylsterigmatocystin (DMDHST), probably also by aflL, VERA being a precursor for aflatoxins B1 and G1, and DMDHST for aflatoxins B2 and G2. Next, the versicolorin reductase aflM and the cytochrome P450 monooxygenase aflN are involved in conversion of VERA to demethylsterigmatocystin (DMST). AflX and aflY seem also involved in this step, through probable aflX-mediated epoxide ring-opening step following versicolorin A oxidation and aflY-mediated Baeyer-Villiger oxidation required for the formation of the xanthone ring. The methyltransferase aflO then leads to the modification of DMST to sterigmatocystin (ST), and of DMDHST to dihydrosterigmatocystin (DHST). Both ST and DHST are then substrates of the O-methyltransferase aflP to yield O-methylsterigmatocystin (OMST) and dihydro-O-methylsterigmatocystin (DHOMST), respectively. Finally OMST is converted to aflatoxins B1 and G1, and DHOMST to aflatoxins B2 and G2, via the action of several enzymes including O-methylsterigmatocystin oxidoreductase aflQ, the cytochrome P450 monooxygenase aflU, but also the NADH-dependent flavin oxidoreductase nadA which is specifically required for the synthesis of AFG1. The chain is Cytochrome P450 monooxygenase aflV from Aspergillus parasiticus (strain ATCC 56775 / NRRL 5862 / SRRC 143 / SU-1).